The primary structure comprises 123 residues: MTTLANLTQTLEDAFKKVFITYMDSWRRNTTAEQQALQARVDAENFYYVILYLMVMIGMFAFIVVAILVSTVKSKRREHSQDPYHQYIVEDWQQKYRSQILHLEDSKATIHENLGATGFTVSP.

N-linked (GlcNAc...) asparagine glycosylation is found at N6 and N29. The chain crosses the membrane as a helical span at residues 49–69 (VILYLMVMIGMFAFIVVAILV). The Cytoplasmic segment spans residues 70–123 (STVKSKRREHSQDPYHQYIVEDWQQKYRSQILHLEDSKATIHENLGATGFTVSP).

This sequence belongs to the potassium channel KCNE family. As to quaternary structure, interacts with KCNB1. Associates with KCNH2/ERG1. May associate with KCNQ2 and KCNQ3. Associates with HCN1 and probably HCN2. Heteromultimer with KCNC2. Interacts with KCNC2. Interacts with KCNQ1; forms a heterooligomer complex that targets to the membrane raft and leading to currents with an apparently instantaneous activation, a rapid deactivation process and a linear current-voltage relationship and decreases the amplitude of the outward current.

Its subcellular location is the cell membrane. It is found in the apical cell membrane. Ancillary protein that functions as a regulatory subunit of the voltage-gated potassium (Kv) channel complex composed of pore-forming and potassium-conducting alpha subunits and of regulatory beta subunits. KCNE2 beta subunit modulates the gating kinetics and enhances stability of the channel complex. Alters the gating of the delayed rectifier Kv channel containing KCNB1 alpha subunit. Associates with KCNH2/HERG alpha subunit Kv channel to form the rapidly activating component of the delayed rectifying potassium current (IKr) in heart. May associate with KCNQ2 and/or KCNQ3 alpha subunits to modulate the native M-type current. May associate with HCN1 and HCN2 channel subunits to increase potassium current. Forms a heterooligomer complex with KCNQ1/KVLQT1 alpha subunits which leads to currents with an apparently instantaneous activation, a rapid deactivation process and a linear current-voltage relationship and decreases the amplitude of the outward current. KCNQ1-KCNE2 channel associates with Na(+)-coupled myo-inositol symporter in the apical membrane of choroid plexus epithelium and regulates the myo-inositol gradient between blood and cerebrospinal fluid with an impact on neuron excitability. The sequence is that of Potassium voltage-gated channel subfamily E member 2 (Kcne2) from Cavia porcellus (Guinea pig).